A 196-amino-acid chain; its full sequence is Protein GrpE (196 aa).

A disordered region spans residues 1-24 (MAENERTTENFQPQDPSYAEAATT).

This sequence belongs to the GrpE family. As to quaternary structure, homodimer.

The protein resides in the cytoplasm. In terms of biological role, participates actively in the response to hyperosmotic and heat shock by preventing the aggregation of stress-denatured proteins, in association with DnaK and GrpE. It is the nucleotide exchange factor for DnaK and may function as a thermosensor. Unfolded proteins bind initially to DnaJ; upon interaction with the DnaJ-bound protein, DnaK hydrolyzes its bound ATP, resulting in the formation of a stable complex. GrpE releases ADP from DnaK; ATP binding to DnaK triggers the release of the substrate protein, thus completing the reaction cycle. Several rounds of ATP-dependent interactions between DnaJ, DnaK and GrpE are required for fully efficient folding. The sequence is that of Protein GrpE from Gloeobacter violaceus (strain ATCC 29082 / PCC 7421).